A 377-amino-acid chain; its full sequence is tRNA-splicing endonuclease subunit SEN2 (377 aa).

Residues 119 to 174 are a coiled coil; it reads ETEMTLEKVTQQRRLQRLEFKKERAKLERELLELRKKGGHIDEENILLEKQRESLR. Active-site residues include Tyr289, His297, and Lys328.

The protein belongs to the tRNA-intron endonuclease family. As to quaternary structure, heterotetramer composed of SEN2, SEN15, SEN34 and SEN54. Interacts directly with SEN54.

It localises to the nucleus. Its subcellular location is the endomembrane system. The protein resides in the mitochondrion outer membrane. It carries out the reaction pretRNA = a 3'-half-tRNA molecule with a 5'-OH end + a 5'-half-tRNA molecule with a 2',3'-cyclic phosphate end + an intron with a 2',3'-cyclic phosphate and a 5'-hydroxyl terminus.. Constitutes one of the two catalytic subunit of the tRNA-splicing endonuclease complex, a complex responsible for identification and cleavage of the splice sites in pre-tRNA. It cleaves pre-tRNA at the 5'- and 3'-splice sites to release the intron. The products are an intron and two tRNA half-molecules bearing 2',3'-cyclic phosphate and 5'-OH termini. There are no conserved sequences at the splice sites, but the intron is invariably located at the same site in the gene, placing the splice sites an invariant distance from the constant structural features of the tRNA body. This subunit may anchor the endonuclease complex to the nuclear membrane. Probably carries the active site for 5'-splice site cleavage. This Saccharomyces cerevisiae (strain ATCC 204508 / S288c) (Baker's yeast) protein is tRNA-splicing endonuclease subunit SEN2 (SEN2).